Here is a 304-residue protein sequence, read N- to C-terminus: 33 kDa chaperonin (304 aa).

Intrachain disulfides connect Cys-236–Cys-238 and Cys-269–Cys-272.

It belongs to the HSP33 family. In terms of processing, under oxidizing conditions two disulfide bonds are formed involving the reactive cysteines. Under reducing conditions zinc is bound to the reactive cysteines and the protein is inactive.

It localises to the cytoplasm. Functionally, redox regulated molecular chaperone. Protects both thermally unfolding and oxidatively damaged proteins from irreversible aggregation. Plays an important role in the bacterial defense system toward oxidative stress. The sequence is that of 33 kDa chaperonin from Pelobacter propionicus (strain DSM 2379 / NBRC 103807 / OttBd1).